Consider the following 308-residue polypeptide: Pantothenate kinase (308 aa).

93–100 (GSVAVGKS) serves as a coordination point for ATP.

It belongs to the prokaryotic pantothenate kinase family.

The protein resides in the cytoplasm. It carries out the reaction (R)-pantothenate + ATP = (R)-4'-phosphopantothenate + ADP + H(+). Its pathway is cofactor biosynthesis; coenzyme A biosynthesis; CoA from (R)-pantothenate: step 1/5. In Corynebacterium diphtheriae (strain ATCC 700971 / NCTC 13129 / Biotype gravis), this protein is Pantothenate kinase.